The primary structure comprises 329 residues: Flotillin-like protein FloA (329 aa).

The chain crosses the membrane as a helical span at residues 4 to 24; the sequence is IWGFLILILVLIFLGVFFSFV.

This sequence belongs to the flotillin-like FloA family. Homooligomerizes.

The protein localises to the cell membrane. It is found in the membrane raft. In terms of biological role, found in functional membrane microdomains (FMM) that may be equivalent to eukaryotic membrane rafts. FMMs are highly dynamic and increase in number as cells age. Flotillins are thought to be important factors in membrane fluidity. In Dictyoglomus turgidum (strain DSM 6724 / Z-1310), this protein is Flotillin-like protein FloA.